We begin with the raw amino-acid sequence, 379 residues long: Putative acetyl-CoA C-acetyltransferase VraB (379 aa).

Cys86 functions as the Acyl-thioester intermediate in the catalytic mechanism. His338 serves as the catalytic Proton acceptor.

The protein belongs to the thiolase-like superfamily. Thiolase family.

The sequence is that of Putative acetyl-CoA C-acetyltransferase VraB (vraB) from Staphylococcus aureus (strain COL).